The following is a 235-amino-acid chain: Large ribosomal subunit protein uL1c (235 aa).

The protein belongs to the universal ribosomal protein uL1 family. As to quaternary structure, part of the 50S ribosomal subunit.

It localises to the plastid. The protein localises to the chloroplast. Binds directly to 23S rRNA. Might be involved in E site tRNA release (Potential). The chain is Large ribosomal subunit protein uL1c (rpl1) from Gracilaria tenuistipitata var. liui (Red alga).